A 1021-amino-acid chain; its full sequence is 2-oxoglutarate dehydrogenase complex component E1 (1021 aa).

A mitochondrion-targeting transit peptide spans 1–40; the sequence is MFNLRTCASKLRPLTASQTIRSLKHNRPAAPRTFQQFRCL. Ca(2+)-binding residues include H142, D155, and D157. Positions 311, 410, 443, and 445 each coordinate thiamine diphosphate. The Mg(2+) site is built by D410, N443, and I445. K533 participates in a covalent cross-link: Glycyl lysine isopeptide (Lys-Gly) (interchain with G-Cter in ubiquitin). Residue Q675 participates in thiamine diphosphate binding.

Belongs to the alpha-ketoglutarate dehydrogenase family. In terms of assembly, homodimer. The 2-oxoglutarate dehydrogenase complex is composed of OGDH (2-oxoglutarate dehydrogenase; E1), DLST (dihydrolipoamide succinyltransferase; E2) and DLD (dihydrolipoamide dehydrogenase; E3). It contains multiple copies of the three enzymatic components (E1, E2 and E3). In the nucleus, the 2-oxoglutarate dehydrogenase complex associates with kat2a. The cofactor is thiamine diphosphate. It depends on Mg(2+) as a cofactor. In terms of tissue distribution, expressed in the brain.

The protein resides in the mitochondrion. The protein localises to the nucleus. It catalyses the reaction N(6)-[(R)-lipoyl]-L-lysyl-[protein] + 2-oxoglutarate + H(+) = N(6)-[(R)-S(8)-succinyldihydrolipoyl]-L-lysyl-[protein] + CO2. Its activity is regulated as follows. Calcium ions and ADP stimulate, whereas ATP and NADH reduce catalytic activity. Functionally, 2-oxoglutarate dehydrogenase (E1o) component of the 2-oxoglutarate dehydrogenase complex (OGDHC). Participates in the first step, rate limiting for the overall conversion of 2-oxoglutarate to succinyl-CoA and CO(2) catalyzed by the whole OGDHC. Catalyzes the irreversible decarboxylation of 2-oxoglutarate (alpha-ketoglutarate) via the thiamine diphosphate (ThDP) cofactor and subsequent transfer of the decarboxylated acyl intermediate on an oxidized dihydrolipoyl group that is covalently amidated to the E2 enzyme (dihydrolipoyllysine-residue succinyltransferase or DLST). Plays a key role in the Krebs (citric acid) cycle, which is a common pathway for oxidation of fuel molecules, including carbohydrates, fatty acids, and amino acids. Can catalyze the decarboxylation of 2-oxoadipate in vitro, but at a much lower rate than 2-oxoglutarate. Mainly active in the mitochondrion. A fraction of the 2-oxoglutarate dehydrogenase complex also localizes in the nucleus and is required for lysine succinylation of histones: associates with KAT2A on chromatin and provides succinyl-CoA to histone succinyltransferase KAT2A. The protein is 2-oxoglutarate dehydrogenase complex component E1 (ogdh) of Xenopus laevis (African clawed frog).